Consider the following 1149-residue polypeptide: Golgi apparatus protein 1 homolog (1149 aa).

The N-terminal stretch at 1 to 19 (MWRFPLILASVCWLTTAQQ) is a signal peptide. Topologically, residues 20–1115 (QNVANDPDKK…NLVMEHPERN (1096 aa)) are extracellular. Cys-rich GLG1 repeat units follow at residues 24–69 (NDPD…FSET), 71–135 (TLSE…KNVT), 139–207 (KCHA…VKNA), 216–276 (ILGD…NDKF), 277–344 (MDPE…NQPE), 349–411 (QPSK…ESRN), 415–475 (KLGA…NVDS), 477–549 (DMVP…YDEQ), 551–610 (PLSV…ETDN), 613–676 (RKHP…DAKE), 677–736 (MNNK…FEHK), 743–803 (DLTD…IECL), 809–867 (HLGP…IVRL), 868–938 (LQRE…RQSI), 945–1009 (DFSP…NKGL), and 1010–1070 (IRDK…DKQE). Asn-133 carries an N-linked (GlcNAc...) asparagine glycan. Residue Asn-411 is glycosylated (N-linked (GlcNAc...) asparagine). Residues 1116-1136 (SILGYLAGFIVFILLIGCCCG) form a helical membrane-spanning segment. At 1137-1149 (RVSKKQYIEMKNR) the chain is on the cytoplasmic side.

The protein resides in the membrane. The chain is Golgi apparatus protein 1 homolog from Caenorhabditis elegans.